Consider the following 80-residue polypeptide: Cell division topological specificity factor (80 aa).

It belongs to the MinE family.

Prevents the cell division inhibition by proteins MinC and MinD at internal division sites while permitting inhibition at polar sites. This ensures cell division at the proper site by restricting the formation of a division septum at the midpoint of the long axis of the cell. The polypeptide is Cell division topological specificity factor (Wolinella succinogenes (strain ATCC 29543 / DSM 1740 / CCUG 13145 / JCM 31913 / LMG 7466 / NCTC 11488 / FDC 602W) (Vibrio succinogenes)).